Reading from the N-terminus, the 107-residue chain is Replication initiation control protein YabA (107 aa).

Zn(2+)-binding residues include His81, Cys83, Cys97, and Cys100.

It belongs to the YabA family. In terms of assembly, homotetramer. Interacts with both DnaA and DnaN, acting as a bridge between these two proteins. The cofactor is Zn(2+).

It is found in the cytoplasm. Its subcellular location is the nucleoid. Its function is as follows. Involved in control of chromosome replication initiation. Inhibits the cooperative binding of DnaA to the oriC region, thus negatively regulating initiation of chromosome replication. Inhibits the ability of DnaA-ATP to form a helix on DNA; does not disassemble preformed DnaA-DNA helices. Decreases the residence time of DnaA on the chromosome at its binding sites (oriC, replication forks and promoter-binding sites). Tethers DnaA to the replication machinery via the DNA polymerase beta sliding clamp subunit (dnaN). Associates with oriC and other DnaA targets on the chromosome in a DnaA-dependent manner. This is Replication initiation control protein YabA from Streptococcus pyogenes serotype M3 (strain ATCC BAA-595 / MGAS315).